We begin with the raw amino-acid sequence, 320 residues long: Methionyl-tRNA formyltransferase (320 aa).

114 to 117 (SLLP) lines the (6S)-5,6,7,8-tetrahydrofolate pocket.

It belongs to the Fmt family.

It carries out the reaction L-methionyl-tRNA(fMet) + (6R)-10-formyltetrahydrofolate = N-formyl-L-methionyl-tRNA(fMet) + (6S)-5,6,7,8-tetrahydrofolate + H(+). Attaches a formyl group to the free amino group of methionyl-tRNA(fMet). The formyl group appears to play a dual role in the initiator identity of N-formylmethionyl-tRNA by promoting its recognition by IF2 and preventing the misappropriation of this tRNA by the elongation apparatus. This Acinetobacter baumannii (strain AB307-0294) protein is Methionyl-tRNA formyltransferase.